The chain runs to 548 residues: Glucose-6-phosphate isomerase 1 (548 aa).

Residue glutamate 353 is the Proton donor of the active site. Residues histidine 384 and lysine 495 contribute to the active site.

This sequence belongs to the GPI family.

It localises to the cytoplasm. The catalysed reaction is alpha-D-glucose 6-phosphate = beta-D-fructose 6-phosphate. The protein operates within carbohydrate biosynthesis; gluconeogenesis. It participates in carbohydrate degradation; glycolysis; D-glyceraldehyde 3-phosphate and glycerone phosphate from D-glucose: step 2/4. In terms of biological role, catalyzes the reversible isomerization of glucose-6-phosphate to fructose-6-phosphate. This Chromohalobacter salexigens (strain ATCC BAA-138 / DSM 3043 / CIP 106854 / NCIMB 13768 / 1H11) protein is Glucose-6-phosphate isomerase 1.